Here is a 741-residue protein sequence, read N- to C-terminus: Photosystem I P700 chlorophyll a apoprotein A2 1 (741 aa).

A run of 8 helical transmembrane segments spans residues I46 to A69, L135 to Q158, L175 to I199, I273 to Y291, L334 to Y357, A373 to V399, A421 to H443, and F524 to V542. Residues C566 and C575 each contribute to the [4Fe-4S] cluster site. Helical transmembrane passes span S582 to W603 and L650 to I672. The chlorophyll a site is built by H661, M669, and Y677. W678 is a phylloquinone binding site. Residues V714–A734 form a helical membrane-spanning segment.

Belongs to the PsaA/PsaB family. The PsaA/B heterodimer binds the P700 chlorophyll special pair and subsequent electron acceptors. PSI consists of a core antenna complex that captures photons, and an electron transfer chain that converts photonic excitation into a charge separation. The cyanobacterial PSI reaction center is composed of one copy each of PsaA,B,C,D,E,F,I,J,K,L,M and X, and forms trimeric complexes. It depends on PSI electron transfer chain: 5 chlorophyll a, 1 chlorophyll a', 2 phylloquinones and 3 4Fe-4S clusters. PSI core antenna: 90 chlorophyll a, 22 carotenoids, 3 phospholipids and 1 galactolipid. P700 is a chlorophyll a/chlorophyll a' dimer, A0 is one or more chlorophyll a, A1 is one or both phylloquinones and FX is a shared 4Fe-4S iron-sulfur center. as a cofactor.

The protein resides in the cellular thylakoid membrane. The enzyme catalyses reduced [plastocyanin] + hnu + oxidized [2Fe-2S]-[ferredoxin] = oxidized [plastocyanin] + reduced [2Fe-2S]-[ferredoxin]. Functionally, psaA and PsaB bind P700, the primary electron donor of photosystem I (PSI), as well as the electron acceptors A0, A1 and FX. PSI is a plastocyanin/cytochrome c6-ferredoxin oxidoreductase, converting photonic excitation into a charge separation, which transfers an electron from the donor P700 chlorophyll pair to the spectroscopically characterized acceptors A0, A1, FX, FA and FB in turn. Oxidized P700 is reduced on the lumenal side of the thylakoid membrane by plastocyanin or cytochrome c6. The protein is Photosystem I P700 chlorophyll a apoprotein A2 1 of Trichormus variabilis (strain ATCC 29413 / PCC 7937) (Anabaena variabilis).